Consider the following 707-residue polypeptide: Elongation factor G (707 aa).

Residues E8–T296 enclose the tr-type G domain. Residues A17–T24, D94–H98, and N148–D151 contribute to the GTP site.

Belongs to the TRAFAC class translation factor GTPase superfamily. Classic translation factor GTPase family. EF-G/EF-2 subfamily.

The protein localises to the cytoplasm. Functionally, catalyzes the GTP-dependent ribosomal translocation step during translation elongation. During this step, the ribosome changes from the pre-translocational (PRE) to the post-translocational (POST) state as the newly formed A-site-bound peptidyl-tRNA and P-site-bound deacylated tRNA move to the P and E sites, respectively. Catalyzes the coordinated movement of the two tRNA molecules, the mRNA and conformational changes in the ribosome. This chain is Elongation factor G, found in Paracoccus denitrificans (strain Pd 1222).